The primary structure comprises 453 residues: RPPPTIPGAPVVGGLLRFLRGPIPLIRAEYARLGPVFTVPILTRRITFLIGPDVSAHFFKSNESDMSQQEVYRFNVPTFGPGVVFDVDYQVRQEQFRFFTEALRANKLRSYVDQMVAEAEEYFSKWGESGTVDLKYELEHLIILTASRCLLGREVREKLFDDVSALFHDLDNGMLPISVIFPYLPIPAHRRRDQARTRLAEIFATIIKSRKASGQSEEDMLQCFIDSKYKNGRQTTESEVTGLLIAALFAGQHTSSITSTWTGAYLLKFQQYFAEAVEEQKEVMKRHGDKIDHDILAEMDVLYRCIKEALRLHPPLIMLLRQSHSDFSVTTREGKEFDIPKGHIVATSPAFANRLPHIFKNPDSYDPDRFAAGREEDKVAGAFSYISFGGGRHGCLGEPFAYLQIKAIWTHLLRNFEFELVSPFPENDWNAMVVGIKGEVMVNYKRRKLIVDN.

Residue Cys-395 participates in heme binding.

Belongs to the cytochrome P450 family. Requires heme as cofactor.

Its subcellular location is the membrane. It carries out the reaction a 14alpha-methyl steroid + 3 reduced [NADPH--hemoprotein reductase] + 3 O2 = a Delta(14) steroid + formate + 3 oxidized [NADPH--hemoprotein reductase] + 4 H2O + 4 H(+). It participates in steroid biosynthesis; zymosterol biosynthesis; zymosterol from lanosterol: step 1/6. In terms of biological role, catalyzes the 14-alpha demethylation of obtusifoliol to 4 alpha-methyl-5 alpha-ergosta-8,14,24(28)-trien-3 beta-ol. This Triticum aestivum (Wheat) protein is Obtusifoliol 14-alpha demethylase (CYP51).